The primary structure comprises 67 residues: Toxin Bl-1 (67 aa).

An LCN-type CS-alpha/beta domain is found at 2-66 (RDGYISQPEN…GIIVDGIKCH (65 aa)). Disulfide bonds link Cys12-Cys65, Cys16-Cys37, Cys23-Cys47, and Cys27-Cys49. Thr67 carries the post-translational modification Threonine amide.

It belongs to the long (4 C-C) scorpion toxin superfamily. Sodium channel inhibitor family. Alpha subfamily. Expressed by the venom gland.

It is found in the secreted. Alpha toxins bind voltage-independently at site-3 of sodium channels (Nav) and inhibit the inactivation of the activated channels, thereby blocking neuronal transmission. Is highly toxic to insects (tested on the crickets A.domesticus). This peptide may also be toxic to mammals, since it is similar to alpha-like toxins that are active on both insect and mammalian sodium channels. The polypeptide is Toxin Bl-1 (Buthacus leptochelys (Egyptian fat-tailed scorpion)).